The chain runs to 666 residues: UvrABC system protein B (666 aa).

A Helicase ATP-binding domain is found at 25 to 412 (EQVQAGAPYQ…EEQIVEQVIR (388 aa)). 38 to 45 (GATGTGKT) contributes to the ATP binding site. A Beta-hairpin motif is present at residues 91 to 114 (YYDYYQPEAYIPVTDTYIAKTASI). Residues 429 to 595 (QVDDLLAEIQ…PIIKRSSNAI (167 aa)) enclose the Helicase C-terminal domain. The UVR domain maps to 626 to 661 (PNLITQLEAQMKEAAKNLEFEEAAQYRDRIKKLRER).

The protein belongs to the UvrB family. In terms of assembly, forms a heterotetramer with UvrA during the search for lesions. Interacts with UvrC in an incision complex.

It localises to the cytoplasm. The UvrABC repair system catalyzes the recognition and processing of DNA lesions. A damage recognition complex composed of 2 UvrA and 2 UvrB subunits scans DNA for abnormalities. Upon binding of the UvrA(2)B(2) complex to a putative damaged site, the DNA wraps around one UvrB monomer. DNA wrap is dependent on ATP binding by UvrB and probably causes local melting of the DNA helix, facilitating insertion of UvrB beta-hairpin between the DNA strands. Then UvrB probes one DNA strand for the presence of a lesion. If a lesion is found the UvrA subunits dissociate and the UvrB-DNA preincision complex is formed. This complex is subsequently bound by UvrC and the second UvrB is released. If no lesion is found, the DNA wraps around the other UvrB subunit that will check the other stand for damage. The chain is UvrABC system protein B from Synechococcus sp. (strain ATCC 27144 / PCC 6301 / SAUG 1402/1) (Anacystis nidulans).